Consider the following 341-residue polypeptide: Glyceraldehyde-3-phosphate dehydrogenase (341 aa).

NAD(+) contacts are provided by residues 11-12 (TI) and glycine 110. 139–141 (SCN) lines the D-glyceraldehyde 3-phosphate pocket. The active-site Nucleophile is cysteine 140. Arginine 168 serves as a coordination point for NAD(+). Position 194–195 (194–195 (HG)) interacts with D-glyceraldehyde 3-phosphate. Glutamine 302 serves as a coordination point for NAD(+).

This sequence belongs to the glyceraldehyde-3-phosphate dehydrogenase family. As to quaternary structure, homotetramer.

The protein localises to the cytoplasm. It carries out the reaction D-glyceraldehyde 3-phosphate + phosphate + NADP(+) = (2R)-3-phospho-glyceroyl phosphate + NADPH + H(+). The catalysed reaction is D-glyceraldehyde 3-phosphate + phosphate + NAD(+) = (2R)-3-phospho-glyceroyl phosphate + NADH + H(+). It functions in the pathway carbohydrate degradation; glycolysis; pyruvate from D-glyceraldehyde 3-phosphate: step 1/5. The sequence is that of Glyceraldehyde-3-phosphate dehydrogenase from Methanoculleus marisnigri (strain ATCC 35101 / DSM 1498 / JR1).